Here is a 122-residue protein sequence, read N- to C-terminus: Large ribosomal subunit protein uL14 (122 aa).

Belongs to the universal ribosomal protein uL14 family. As to quaternary structure, part of the 50S ribosomal subunit. Forms a cluster with proteins L3 and L19. In the 70S ribosome, L14 and L19 interact and together make contacts with the 16S rRNA in bridges B5 and B8.

In terms of biological role, binds to 23S rRNA. Forms part of two intersubunit bridges in the 70S ribosome. This is Large ribosomal subunit protein uL14 from Anaeromyxobacter sp. (strain Fw109-5).